The primary structure comprises 398 residues: Lysophospholipid transporter LplT (398 aa).

The next 11 membrane-spanning stretches (helical) occupy residues 19 to 39 (VIAA…ATLA), 53 to 73 (ILQM…GQVA), 91 to 111 (LGAA…LVGI), 139 to 159 (LMEA…GVLA), 164 to 184 (IAAL…NLFI), 227 to 247 (LFWG…PVAL), 257 to 277 (YLNA…AKLV), 281 to 301 (TVAR…IFSL), 304 to 324 (ALLP…FFVV), 350 to 370 (GENS…LVGI), and 372 to 392 (VVAI…ALWI).

This sequence belongs to the major facilitator superfamily. LplT (TC 2.A.1.42) family.

It localises to the cell inner membrane. Catalyzes the facilitated diffusion of 2-acyl-glycero-3-phosphoethanolamine (2-acyl-GPE) into the cell. The protein is Lysophospholipid transporter LplT of Citrobacter koseri (strain ATCC BAA-895 / CDC 4225-83 / SGSC4696).